The following is a 129-amino-acid chain: MSASLVRATVRAVSKRKLQPTRAALTLTPSAVNKIKQLLKDKPEHVGLKVGVRTRGCNGLSYSLEYTKTKGDADEEVIQDGVRVFIEKKAQLTLLGTEMDYVEDKLSSEFVFNNPNIKGTCGCGESFNV.

The N-terminal 12 residues, 1–12 (MSASLVRATVRA), are a transit peptide targeting the mitochondrion. The Fe cation site is built by Cys57, Cys121, and Cys123.

Belongs to the HesB/IscA family. As to quaternary structure, interacts with CRY2, but not with CRY1 (in vitro).

It localises to the mitochondrion. Its function is as follows. Involved in the maturation of mitochondrial 4Fe-4S proteins functioning late in the iron-sulfur cluster assembly pathway. Probably involved in the binding of an intermediate of Fe/S cluster assembly. The protein is Iron-sulfur cluster assembly 1 homolog, mitochondrial (Isca1) of Rattus norvegicus (Rat).